Consider the following 245-residue polypeptide: Phycocyanobilin:ferredoxin oxidoreductase (245 aa).

This sequence belongs to the HY2 family.

It carries out the reaction (2R,3Z)-phycocyanobilin + 4 oxidized [2Fe-2S]-[ferredoxin] = biliverdin IXalpha + 4 reduced [2Fe-2S]-[ferredoxin] + 4 H(+). In terms of biological role, catalyzes the four-electron reduction of biliverdin IX-alpha (2-electron reduction at both the A and D rings); the reaction proceeds via an isolatable 2-electron intermediate, 181,182-dihydrobiliverdin. Upon overexpression in E.coli with PCB:ferredoxin oxidoreductase, CpeS and either CpcB or PecB permits synthesis of phycocyanin-coupled CpcB or PecB. The chain is Phycocyanobilin:ferredoxin oxidoreductase (pcyA) from Nostoc sp. (strain PCC 7120 / SAG 25.82 / UTEX 2576).